The primary structure comprises 273 residues: uncharacterized protein (273 aa).

The protein belongs to the PhyH family.

This is an uncharacterized protein from Mycobacterium tuberculosis (strain ATCC 25618 / H37Rv).